A 369-amino-acid polypeptide reads, in one-letter code: Protein VP6 (369 aa).

2 disordered regions span residues 17-169 and 184-208; these read KREL…LQGR and LDRI…GGDR. Residues 29–68 show a composition bias toward basic and acidic residues; it reads LREKGSTEAKSKLKEDGEKKNKSEKEENKIHDDRRVESQK. Gly residues predominate over residues 92 to 111; the sequence is TGGGDGSAGARTGIGGGGVG. Basic and acidic residues-rich tracts occupy residues 137 to 148 and 196 to 208; these read TGADRVANDDAT and TEGE…GGDR.

It belongs to the orbivirus VP6 family.

It localises to the virion. This chain is Protein VP6 (Segment-9), found in African horse sickness virus (AHSV).